The following is a 264-amino-acid chain: Thymidylate synthase (264 aa).

DUMP is bound at residue R21. (6R)-5,10-methylene-5,6,7,8-tetrahydrofolate is bound at residue H51. 126–127 lines the dUMP pocket; it reads RR. C146 acts as the Nucleophile in catalysis. DUMP is bound by residues 166-169, N177, and 207-209; these read RSAD and HLY. (6R)-5,10-methylene-5,6,7,8-tetrahydrofolate is bound at residue D169. A263 contacts (6R)-5,10-methylene-5,6,7,8-tetrahydrofolate.

This sequence belongs to the thymidylate synthase family. Bacterial-type ThyA subfamily. As to quaternary structure, homodimer.

It is found in the cytoplasm. The enzyme catalyses dUMP + (6R)-5,10-methylene-5,6,7,8-tetrahydrofolate = 7,8-dihydrofolate + dTMP. It functions in the pathway pyrimidine metabolism; dTTP biosynthesis. Functionally, catalyzes the reductive methylation of 2'-deoxyuridine-5'-monophosphate (dUMP) to 2'-deoxythymidine-5'-monophosphate (dTMP) while utilizing 5,10-methylenetetrahydrofolate (mTHF) as the methyl donor and reductant in the reaction, yielding dihydrofolate (DHF) as a by-product. This enzymatic reaction provides an intracellular de novo source of dTMP, an essential precursor for DNA biosynthesis. The protein is Thymidylate synthase of Mesorhizobium japonicum (strain LMG 29417 / CECT 9101 / MAFF 303099) (Mesorhizobium loti (strain MAFF 303099)).